A 153-amino-acid chain; its full sequence is Bacteriohemerythrin (153 aa).

Residues H21, H57, E61, H76, H80, H115, and D120 each contribute to the Fe cation site.

This sequence belongs to the hemerythrin family. As to quaternary structure, monomer.

Functionally, oxygen-binding protein. May be involved in a storage mechanism or for delivery to oxygen-requiring enzymes. The oxygen-binding site contains two iron atoms. This is Bacteriohemerythrin from Pseudomonas aeruginosa (strain UCBPP-PA14).